We begin with the raw amino-acid sequence, 537 residues long: Cytochrome P450 monooxygenase claR (537 aa).

The helical transmembrane segment at 23–43 (VVTITEVALGIITLYLLGSYI) threads the bilayer. Cys-454 serves as a coordination point for heme.

This sequence belongs to the cytochrome P450 family. It depends on heme as a cofactor.

It localises to the membrane. The catalysed reaction is (2E)-geranylhydroquinone + reduced [NADPH--hemoprotein reductase] + O2 = wigandol + oxidized [NADPH--hemoprotein reductase] + 2 H2O + H(+). It functions in the pathway secondary metabolite biosynthesis; terpenoid biosynthesis. Cytochrome P450 monooxygenase; part of the gene cluster that mediates the biosynthesis of clavilactone A, a meroterpenoid that features a unique benzo-fused ten-membered carbocyclic ring unit with an alpha,beta-epoxy-gamma-lactone moiety, forming an intriguing 10/5/3 tricyclic nested skeleton. ClaR, ClaS and ClaT are sufficient to produce clavilactone A. ClaR acts as a macrocyclase to catalyze the oxidative cyclization of the isopentenyl to the nonterpenoid moieties to form the benzo-fused macrocycle, leading to wigantol. The biosynthesis begins with the prenyltransferase claS that transfers geranyl pyrophosphate (GPP) to hydroquinone to produces geranylhydroquinone. The cytochrome P450 monooxygenase claR then catalyzes the diradical coupling reaction between the intramolecular hydroquinone and allyl moieties to form the benzo-fused ten-membered carbocyclic ring unit of wigantol. Finally the cytochrome P450 monooxygenase claT exquisitely and stereoselectively assembles the alpha,beta-epoxy-gamma-lactone moiety, producing clavilactone A via arnebinol A. This is Cytochrome P450 monooxygenase claR from Ampulloclitocybe clavipes (Club foot).